A 199-amino-acid chain; its full sequence is Protein ZNRD2 (199 aa).

Position 2 is an N-acetylalanine (Ala-2). Zn(2+)-binding residues include Cys-53, Cys-56, Cys-70, and Cys-73. Ser-94 is modified (phosphoserine). A disordered region spans residues 100–125 (QLASASELPLGSRPAPQPPVPRPEHC). The Nuclear export signal motif lies at 173–194 (SLETSIQLCGLIRACAEALRSL).

As to quaternary structure, homodimer. Zn(2+) serves as cofactor.

It localises to the cytoplasm. Its function is as follows. Might play a role in mitosis. Antigenic molecule. Could be a centromere-associated protein. May induce anti-centromere antibodies. This Homo sapiens (Human) protein is Protein ZNRD2.